The primary structure comprises 113 residues: UPF0251 protein Teth514_1147 (113 aa).

Belongs to the UPF0251 family.

This chain is UPF0251 protein Teth514_1147, found in Thermoanaerobacter sp. (strain X514).